Consider the following 634-residue polypeptide: Mediator of RNA polymerase II transcription subunit 17 (634 aa).

2 disordered regions span residues 51-73 (DKHKDPWAEDEESDGQSAADVDT) and 606-626 (DEKASRAQSWKPDSTTPGSPG). Residues 611–623 (RAQSWKPDSTTPG) show a composition bias toward polar residues.

Belongs to the Mediator complex subunit 17 family. As to quaternary structure, component of the Mediator complex.

The protein localises to the nucleus. Its function is as follows. Component of the Mediator complex, a coactivator involved in the regulated transcription of nearly all RNA polymerase II-dependent genes. Mediator functions as a bridge to convey information from gene-specific regulatory proteins to the basal RNA polymerase II transcription machinery. Mediator is recruited to promoters by direct interactions with regulatory proteins and serves as a scaffold for the assembly of a functional preinitiation complex with RNA polymerase II and the general transcription factors. The chain is Mediator of RNA polymerase II transcription subunit 17 (srb4) from Aspergillus terreus (strain NIH 2624 / FGSC A1156).